Reading from the N-terminus, the 343-residue chain is L-threonine 3-dehydrogenase (343 aa).

Cys38 is a binding site for Zn(2+). Active-site charge relay system residues include Thr40 and His43. Residues His63, Glu64, Cys93, Cys96, Cys99, and Cys107 each contribute to the Zn(2+) site. Residues Ile176, Asp196, Arg201, 261–263, and 286–288 contribute to the NAD(+) site; these read LGI and IAG.

It belongs to the zinc-containing alcohol dehydrogenase family. In terms of assembly, homotetramer. It depends on Zn(2+) as a cofactor.

The protein resides in the cytoplasm. The enzyme catalyses L-threonine + NAD(+) = (2S)-2-amino-3-oxobutanoate + NADH + H(+). It participates in amino-acid degradation; L-threonine degradation via oxydo-reductase pathway; glycine from L-threonine: step 1/2. Its function is as follows. Catalyzes the NAD(+)-dependent oxidation of L-threonine to 2-amino-3-ketobutyrate. The polypeptide is L-threonine 3-dehydrogenase (Thermus thermophilus (strain ATCC 27634 / DSM 579 / HB8)).